The primary structure comprises 144 residues: PE family protein PE9 (144 aa).

Residues 1-87 form the PE domain; the sequence is MSYMIATPAA…RTLTGGCGVF (87 aa). Positions 98–124 are disordered; the sequence is AAEHRAAGAGRRQRRRRSGDGQWRLRQ.

It belongs to the mycobacterial PE family. As to quaternary structure, forms a complex with PE10. The complex interacts with human TLR4.

The protein resides in the secreted. The protein localises to the cell wall. It is found in the cell surface. Its function is as follows. Together with PE10, induces macrophage apoptosis through human Toll-like receptor 4 (TLR4) signaling pathway. Interaction with TLR4 leads to increased levels of phospho-IRF-3, increase in the transcript levels of IFN-beta and pro-apoptotic genes, up-regulation of IL-10, down-regulation of IL-1b and enhanced levels of macrophage apoptosis. This chain is PE family protein PE9, found in Mycobacterium tuberculosis (strain ATCC 25618 / H37Rv).